Reading from the N-terminus, the 271-residue chain is 5-deoxy-glucuronate isomerase (271 aa).

The protein belongs to the isomerase IolB family.

It catalyses the reaction 5-deoxy-D-glucuronate = 5-dehydro-2-deoxy-D-gluconate. Its pathway is polyol metabolism; myo-inositol degradation into acetyl-CoA; acetyl-CoA from myo-inositol: step 4/7. In terms of biological role, involved in the isomerization of 5-deoxy-glucuronate (5DG) to 5-dehydro-2-deoxy-D-gluconate (DKG or 2-deoxy-5-keto-D-gluconate). The sequence is that of 5-deoxy-glucuronate isomerase from Lacticaseibacillus casei (Lactobacillus casei).